Here is a 314-residue protein sequence, read N- to C-terminus: Olfactory receptor 2W3 (314 aa).

Residues 1-25 lie on the Extracellular side of the membrane; the sequence is MDGTNGSTQTHFILLGFSDRPHLER. The N-linked (GlcNAc...) asparagine glycan is linked to N5. The chain crosses the membrane as a helical span at residues 26-49; it reads ILFVVILIAYLLTLVGNTTIILVS. Topologically, residues 50-57 are cytoplasmic; the sequence is RLDPHLHT. Residues 58 to 79 form a helical membrane-spanning segment; it reads PMYFFLAHLSFLDLSFTTSSIP. Residues 80–100 are Extracellular-facing; that stretch reads QLLYNLNGCDKTISYMGCAIQ. A helical transmembrane segment spans residues 101–120; that stretch reads LFLFLGLGGVECLLLAVMAY. The Cytoplasmic portion of the chain corresponds to 121-139; that stretch reads DRCVAICKPLHYMVIMNPR. A helical transmembrane segment spans residues 140 to 158; that stretch reads LCRGLVSVTWGCGVANSLA. Topologically, residues 159-195 are extracellular; the sequence is MSPVTLRLPRCGHHEVDHFLREMPALIRMACVSTVAI. Residues 196-219 traverse the membrane as a helical segment; the sequence is EGTVFVLAVGVVLSPLVFILLSYS. Residues 220-236 are Cytoplasmic-facing; sequence YIVRAVLQIRSASGRQK. The chain crosses the membrane as a helical span at residues 237-259; the sequence is AFGTCGSHLTVVSLFYGNIIYMY. Residues 260–272 lie on the Extracellular side of the membrane; the sequence is MQPGASSSQDQGM. The helical transmembrane segment at 273–292 threads the bilayer; sequence FLMLFYNIVTPLLNPLIYTL. At 293 to 314 the chain is on the cytoplasmic side; the sequence is RNREVKGALGRLLLGKRELGKE.

The protein belongs to the G-protein coupled receptor 1 family.

The protein localises to the cell membrane. Its function is as follows. Odorant receptor. This is Olfactory receptor 2W3 (OR2W3) from Homo sapiens (Human).